A 281-amino-acid polypeptide reads, in one-letter code: ATP phosphoribosyltransferase (281 aa).

The protein belongs to the ATP phosphoribosyltransferase family. Long subfamily. Requires Mg(2+) as cofactor.

It localises to the cytoplasm. It carries out the reaction 1-(5-phospho-beta-D-ribosyl)-ATP + diphosphate = 5-phospho-alpha-D-ribose 1-diphosphate + ATP. It participates in amino-acid biosynthesis; L-histidine biosynthesis; L-histidine from 5-phospho-alpha-D-ribose 1-diphosphate: step 1/9. With respect to regulation, feedback inhibited by histidine. Its function is as follows. Catalyzes the condensation of ATP and 5-phosphoribose 1-diphosphate to form N'-(5'-phosphoribosyl)-ATP (PR-ATP). Has a crucial role in the pathway because the rate of histidine biosynthesis seems to be controlled primarily by regulation of HisG enzymatic activity. This is ATP phosphoribosyltransferase (hisG) from Archaeoglobus fulgidus (strain ATCC 49558 / DSM 4304 / JCM 9628 / NBRC 100126 / VC-16).